The sequence spans 632 residues: Chaperone protein HtpG (632 aa).

Positions methionine 1–arginine 339 are a; substrate-binding. Residues glutamate 340–arginine 559 form a b region. The segment at methionine 560–alanine 632 is c.

The protein belongs to the heat shock protein 90 family. In terms of assembly, homodimer.

The protein resides in the cytoplasm. Its function is as follows. Molecular chaperone. Has ATPase activity. In Burkholderia lata (strain ATCC 17760 / DSM 23089 / LMG 22485 / NCIMB 9086 / R18194 / 383), this protein is Chaperone protein HtpG.